A 64-amino-acid polypeptide reads, in one-letter code: Disintegrin VA6 (64 aa).

The Disintegrin domain maps to 1–64; it reads NSANPCCDPV…SDCPRNPYKS (64 aa). 4 cysteine pairs are disulfide-bonded: cysteine 6-cysteine 29, cysteine 20-cysteine 26, cysteine 25-cysteine 50, and cysteine 38-cysteine 57. The short motif at 42–44 is the Cell attachment site element; it reads RGD.

This sequence belongs to the venom metalloproteinase (M12B) family. P-II subfamily. P-IId sub-subfamily. In terms of assembly, homodimer; disulfide-linked. As to expression, expressed by the venom gland.

It is found in the secreted. Its function is as follows. Poor inhibitor of platelet aggregation. The disintegrin inhibits the adhesion of cells expressing the RGD-dependent integrin alpha-5/beta-1 (ITGA5/ITGB1) to immobilized fibronectin. Inhibition on alpha-IIb/beta-3 (ITGA2B/ITGB3) is low, and there is no inhibition on alpha-1/beta-1 (ITGA1/ITGB1), alpha-2/beta-1 (ITGA2/ITGB1) and alpha-6/beta-1 (ITGA6/ITGB1). This chain is Disintegrin VA6, found in Vipera ammodytes ammodytes (Western sand viper).